A 403-amino-acid polypeptide reads, in one-letter code: Tyrosine--tRNA ligase (403 aa).

Residues 45 to 54 (PTAPDLHLGH) carry the 'HIGH' region motif. Residues 229–233 (KMSKS) carry the 'KMSKS' region motif. Residue lysine 232 coordinates ATP. The S4 RNA-binding domain maps to 341–402 (VALCRLLAEA…GKRRFARITF (62 aa)).

It belongs to the class-I aminoacyl-tRNA synthetase family. TyrS type 2 subfamily. In terms of assembly, homodimer.

It is found in the cytoplasm. The enzyme catalyses tRNA(Tyr) + L-tyrosine + ATP = L-tyrosyl-tRNA(Tyr) + AMP + diphosphate + H(+). In terms of biological role, catalyzes the attachment of tyrosine to tRNA(Tyr) in a two-step reaction: tyrosine is first activated by ATP to form Tyr-AMP and then transferred to the acceptor end of tRNA(Tyr). The chain is Tyrosine--tRNA ligase from Geobacter sulfurreducens (strain ATCC 51573 / DSM 12127 / PCA).